The sequence spans 581 residues: uncharacterized protein (581 aa).

The protein belongs to the UbiD family.

This is an uncharacterized protein from Chlamydia caviae (strain ATCC VR-813 / DSM 19441 / 03DC25 / GPIC) (Chlamydophila caviae).